The primary structure comprises 743 residues: Protein will decrease acetylation (743 aa).

WD repeat units follow at residues E389 to K428, L493 to W524, Y535 to I576, Y577 to V618, F619 to E660, and L661 to D702.

Belongs to the WD repeat TAF5 family. Component of the Spt-Ada-Gcn5 acetyltransferase (SAGA) complex consisting of wda/Taf5L, Saf6, Taf9, Taf10b, Taf12, Ada1, Spt3, Spt7, Spt20, Sf3b3, Sf3b5, Nipped-A/Tra1, a histone acetyltransferase (HAT) module made up of Gcn5, Ada2b (Isoform B), Ada3 and Sgf29, and a deubiquitinase (DUB) module made up of not/nonstop, Sgf11 and e(y)2 tethered to SAGA by Atxn7. Not essential for the assembly or integrity of the SAGA complex. Not a component of the Ada2a-containing ATAC complex.

The protein resides in the nucleus. Its subcellular location is the chromosome. Functionally, component of the transcription regulatory complex SAGA, a multiprotein complex that activates transcription by remodeling chromatin and mediating histone acetylation and deubiquitination. The SAGA complex predominantly acetylates histone H3. Involved in acetylation of histone H3 on 'Lys-10' (H3K9ac) by the SAGA complex in the larval central nervous system. Involved in SAGA complex coactivator functions. Required for oogenesis. In Drosophila melanogaster (Fruit fly), this protein is Protein will decrease acetylation.